Consider the following 663-residue polypeptide: Polyunsaturated fatty acid lipoxygenase ALOX15 (663 aa).

The region spanning 2–115 (GVYRIRVSTG…ILNLPEGTGC (114 aa)) is the PLAT domain. The region spanning 116 to 663 (TVVEDSQGLF…PSLVENSVAI (548 aa)) is the Lipoxygenase domain. Positions 361, 366, 541, 545, and 663 each coordinate Fe cation.

This sequence belongs to the lipoxygenase family. In terms of assembly, interacts with PEBP1; in response to IL13/interleukin-13, prevents the interaction of PEBP1 with RAF1 to activate the ERK signaling cascade. Fe cation is required as a cofactor. As to expression, found in pituitary and pineal glands as well as leukocytes, kidney, aorta, small intestine and cornea. Also expressed by resident peritoneal macrophages (at protein level).

The protein resides in the cytoplasm. It is found in the cytosol. The protein localises to the cell membrane. It localises to the lipid droplet. The enzyme catalyses (5Z,8Z,11Z,14Z)-eicosatetraenoate + O2 = (12S)-hydroperoxy-(5Z,8Z,10E,14Z)-eicosatetraenoate. It catalyses the reaction (5Z,8Z,11Z,14Z)-eicosatetraenoate + O2 = (15S)-hydroperoxy-(5Z,8Z,11Z,13E)-eicosatetraenoate. The catalysed reaction is (9Z,12Z)-octadecadienoate + O2 = (13S)-hydroperoxy-(9Z,11E)-octadecadienoate. It carries out the reaction (5Z,8Z,11Z,14Z)-eicosatetraenoate + 2 O2 = (14R,15S)-dihydroperoxy-(5Z,8Z,10E,12E)-eicosatetraenoate. The enzyme catalyses (5Z,8Z,11Z,14Z)-eicosatetraenoate + 2 O2 = (8S,15S)-dihydroperoxy-(5Z,9E,11Z,13E)-eicosatetraenoate. It catalyses the reaction (14S,15R)-epoxy-(5Z,8Z,11Z)-eicosatrienoate + O2 = (8S)-hydroperoxy-(14S,15R)-epoxy-(5Z,9E,11Z)-eicosatrienoate. The catalysed reaction is (14S,15R)-epoxy-(5Z,8Z,11Z)-eicosatrienoate + O2 = (12S)-hydroperoxy-(14S,15R)-epoxy-(5Z,8Z,10E)-eicosatrienoate. It carries out the reaction (14R,15S)-epoxy-(5Z,8Z,11Z)-eicosatrienoate + O2 = (5S)-hydroperoxy-(14R,15S)-epoxy-(6E,8Z,11Z)-eicosatrienoate. The enzyme catalyses (14R,15S)-epoxy-(5Z,8Z,11Z)-eicosatrienoate + O2 = (12S)-hydroperoxy-(14R,15S)-epoxy-(5Z,8Z,10E)-eicosatrienoate. It catalyses the reaction (15R)-hydroperoxy-(5Z,8Z,11Z,13E)-eicosatetraenoate = 15-oxo-(5Z,8Z,11Z,13E)-eicosatetraenoate + H2O. The catalysed reaction is (15S)-hydroperoxy-(5Z,8Z,11Z,13E)-eicosatetraenoate = (14S,15S)-epoxy-(5Z,8Z,10E,12E)-eicosatetraenoate + H2O. It carries out the reaction (12S)-hydroperoxy-(5Z,8Z,10E,14Z)-eicosatetraenoate = (8S)-hydroxy-(11S,12S)-epoxy-(5Z,9E,14Z)-eicosatrienoate. The enzyme catalyses (4Z,7Z,10Z,13Z,16Z)-docosapentaenoate + O2 = 14-hydroperoxy-(4Z,7Z,10Z,12E,16Z)-docosapentaenoate. It catalyses the reaction (7Z,10Z,13Z,16Z,19Z)-docosapentaenoate + O2 = 14-hydroperoxy-(7Z,10Z,12E,16Z,19Z)-docosapentaenoate. The catalysed reaction is (4Z,7Z,10Z,13Z,16Z,19Z)-docosahexaenoate + O2 = (14S)-hydroperoxy-(4Z,7Z,10Z,12E,16Z,19Z)-docosahexaenoate. It carries out the reaction (4Z,7Z,10Z,13Z,16Z,19Z)-docosahexaenoate + O2 = (17S)-hydroperoxy-(4Z,7Z,10Z,13Z,15E,19Z)-docosahexaenoate. The enzyme catalyses (7S)-hydroperoxy-(4Z,8E,10Z,13Z,16Z,19Z)-docosahexaenoate + O2 = (7S,14S)-dihydroperoxy-(4Z,8E,10Z,12E,16Z,19Z)-docosahexaenoate. It catalyses the reaction (7S)-hydroperoxy-(4Z,8E,10Z,13Z,16Z,19Z)-docosahexaenoate + O2 = (7S,17S)-dihydroperoxy-(4Z,8E,10Z,13Z,15E,19Z)-docosahexaenoate. The catalysed reaction is (4Z,7Z,10Z,13Z,16Z,19Z)-docosahexaenoate + O2 = (11S)-hydroperoxy-(4Z,7Z,9E,13Z,16Z,19Z)-docosahexaenoate. It carries out the reaction N-(5Z,8Z,11Z,14Z)-eicosatetraenoyl-taurine + O2 = N-(12S)-hydroperoxy-(5Z,8Z,10E,14Z)-eicosatetraenoyl-taurine. The enzyme catalyses N-(5Z,8Z,11Z,14Z)-eicosatetraenoyl-gamma-aminobutanoate + O2 = N-(12S)-hydroperoxy-(5Z,8Z,10E,14Z)-eicosatetraenoyl-gamma-aminobutanoate. It catalyses the reaction N-(5Z,8Z,11Z,14Z)-eicosatetraenoyl-glycine + O2 = N-(12S)-hydroperoxy-(5Z,8Z,10E,14Z)-eicosatetraenoyl-glycine. The catalysed reaction is N-(5Z,8Z,11Z,14Z)-eicosatetraenoyl-L-alanine + O2 = N-(12S)-hydroperoxy-(5Z,8Z,10E,14Z)-eicosatetraenoyl-alanine. It carries out the reaction N-(5Z,8Z,11Z,14Z)-eicosatetraenoyl-taurine + O2 = N-(15S)-hydroperoxy-(5Z,8Z,11Z,13E)-eicosatetraenoyl-taurine. The enzyme catalyses N-(5Z,8Z,11Z,14Z)-eicosatetraenoyl-gamma-aminobutanoate + O2 = N-(15S)-hydroperoxy-(5Z,8Z,11Z,13E)-eicosatetraenoyl-gamma-aminobutanoate. It catalyses the reaction N-(5Z,8Z,11Z,14Z)-eicosatetraenoyl-glycine + O2 = N-(15S)-hydroperoxy-(5Z,8Z,11Z,13E)-eicosatetraenoyl-glycine. The catalysed reaction is N-(5Z,8Z,11Z,14Z)-eicosatetraenoyl-L-alanine + O2 = N-(15S)-hydroperoxy-(5Z,8Z,11Z,13E)-eicosatetraenoyl-alanine. It functions in the pathway lipid metabolism; hydroperoxy eicosatetraenoic acid biosynthesis. In terms of biological role, non-heme iron-containing dioxygenase that catalyzes the stereo-specific peroxidation of free and esterified polyunsaturated fatty acids generating a spectrum of bioactive lipid mediators. It inserts peroxyl groups at C12 or C15 of arachidonate ((5Z,8Z,11Z,14Z)-eicosatetraenoate) producing both 12-hydroperoxyeicosatetraenoate/12-HPETE and 15-hydroperoxyeicosatetraenoate/15-HPETE. It may then act on 12-HPETE to produce hepoxilins, which may show pro-inflammatory properties. Can also peroxidize linoleate ((9Z,12Z)-octadecadienoate) to 13-hydroperoxyoctadecadienoate. May participate in the sequential oxidations of DHA ((4Z,7Z,10Z,13Z,16Z,19Z)-docosahexaenoate) to generate specialized pro-resolving mediators (SPMs)like resolvin D5 ((7S,17S)-diHPDHA) and (7S,14S)-diHPDHA, that actively down-regulate the immune response and have anti-aggregation properties with platelets. Can convert epoxy fatty acids to hydroperoxy-epoxides derivatives followed by an intramolecular nucleophilic substitution leading to the formation of monocyclic endoperoxides. Plays an important role during the maintenance of self-tolerance by peroxidizing membrane-bound phosphatidylethanolamine which can then signal the sorting process for clearance of apoptotic cells during inflammation and prevent an autoimmune response. In addition to its role in the immune and inflammatory responses, this enzyme may play a role in epithelial wound healing in the cornea through production of lipoxin A4 (LXA(4)) and docosahexaenoic acid-derived neuroprotectin D1 (NPD1; 10R,17S-HDHA), both lipid autacoids exhibit anti-inflammatory and neuroprotective properties. Furthermore, it may regulate actin polymerization which is crucial for several biological processes such as the phagocytosis of apoptotic cells. It is also implicated in the generation of endogenous ligands for peroxisome proliferator activated receptor (PPAR-gamma), hence modulating macrophage development and function. It may also exert a negative effect on skeletal development by regulating bone mass through this pathway. As well as participates in ER stress and downstream inflammation in adipocytes, pancreatic islets, and liver. Finally, it is also involved in the cellular response to IL13/interleukin-13. The protein is Polyunsaturated fatty acid lipoxygenase ALOX15 of Mus musculus (Mouse).